Here is a 290-residue protein sequence, read N- to C-terminus: Protease HtpX (290 aa).

The next 2 membrane-spanning stretches (helical) occupy residues 4-24 and 36-56; these read IFLF…TLKL and GSLL…SLFI. H142 serves as a coordination point for Zn(2+). E143 is an active-site residue. H146 contacts Zn(2+). The next 2 helical transmembrane spans lie at 150–170 and 193–213; these read GDMV…MFFA and FVAT…IVMW. A Zn(2+)-binding site is contributed by E219.

Belongs to the peptidase M48B family. Requires Zn(2+) as cofactor.

It localises to the cell inner membrane. The protein is Protease HtpX of Stutzerimonas stutzeri (strain A1501) (Pseudomonas stutzeri).